Here is a 298-residue protein sequence, read N- to C-terminus: Probable alpha-L-glutamate ligase (298 aa).

The ATP-grasp domain occupies 104-287 (MQLLSRHGIG…VAGKIIEFLE (184 aa)). ATP-binding positions include Lys141, 178–179 (EY), Asp187, and 211–213 (RSN). Mg(2+) contacts are provided by Asp248, Glu260, and Asn262. The Mn(2+) site is built by Asp248, Glu260, and Asn262.

The protein belongs to the RimK family. The cofactor is Mg(2+). Mn(2+) serves as cofactor.

In Aeromonas salmonicida (strain A449), this protein is Probable alpha-L-glutamate ligase.